The primary structure comprises 181 residues: MARRGQQPPPQQAPPAQKNQTGKFNPAEFVKPGLTEEEVLEIKEAFDLFDTDGTQSIDPKELKAAMTSLGFEAKNQTIYQMISDLDTDGSGQIDFAEFLKLMTARISERDSKADIQKVFNLFDSERAGVITLKDLRKVAKELGETMDDSELQEMIDRADSDGDAQVTFEDFYNIMTKKTFA.

The disordered stretch occupies residues 1 to 29 (MARRGQQPPPQQAPPAQKNQTGKFNPAEF). EF-hand domains follow at residues 37-72 (EEVLEIKEAFDLFDTDGTQSIDPKELKAAMTSLGFE), 73-108 (AKNQTIYQMISDLDTDGSGQIDFAEFLKLMTARISE), 110-145 (DSKADIQKVFNLFDSERAGVITLKDLRKVAKELGET), and 146-181 (MDDSELQEMIDRADSDGDAQVTFEDFYNIMTKKTFA). Asp-50, Asp-52, Thr-54, Ser-56, Glu-61, Asp-86, Asp-88, Ser-90, Gln-92, and Glu-97 together coordinate Ca(2+).

It belongs to the centrin family. As to quaternary structure, monomer.

It localises to the cytoplasm. Its subcellular location is the cytoskeleton. Its function is as follows. Plays a fundamental role in microtubule organizing center structure and function. Component of the infraciliary lattice (ICL) and the ciliary basal bodies. This chain is Caltractin ICL1d (Icl1d), found in Paramecium tetraurelia.